The chain runs to 215 residues: Probable phosphoglycerate mutase GpmB (215 aa).

Residues 8 to 15 (RHGETQWN), 21 to 22 (QG), arginine 58, arginine 60, 82 to 85 (ELNM), 104 to 105 (RR), and 151 to 152 (GI) each bind substrate. Histidine 9 functions as the Tele-phosphohistidine intermediate in the catalytic mechanism. Glutamate 82 (proton donor/acceptor) is an active-site residue.

This sequence belongs to the phosphoglycerate mutase family. GpmB subfamily.

The catalysed reaction is (2R)-2-phosphoglycerate = (2R)-3-phosphoglycerate. It participates in carbohydrate degradation; glycolysis; pyruvate from D-glyceraldehyde 3-phosphate: step 3/5. The sequence is that of Probable phosphoglycerate mutase GpmB from Escherichia coli O9:H4 (strain HS).